Here is a 195-residue protein sequence, read N- to C-terminus: Proteasome subunit beta 1 (195 aa).

Residues 1–6 constitute a propeptide, removed in mature form; by autocatalysis; it reads MEELPA. The Nucleophile role is filled by Thr-7.

Belongs to the peptidase T1B family. In terms of assembly, the 20S proteasome core is composed of 14 alpha and 14 beta subunits that assemble into four stacked heptameric rings, resulting in a barrel-shaped structure. The two inner rings, each composed of seven catalytic beta subunits, are sandwiched by two outer rings, each composed of seven alpha subunits. The catalytic chamber with the active sites is on the inside of the barrel. Has a gated structure, the ends of the cylinder being occluded by the N-termini of the alpha-subunits. Is capped at one or both ends by the proteasome regulatory ATPase, PAN.

It localises to the cytoplasm. It carries out the reaction Cleavage of peptide bonds with very broad specificity.. With respect to regulation, the formation of the proteasomal ATPase PAN-20S proteasome complex, via the docking of the C-termini of PAN into the intersubunit pockets in the alpha-rings, triggers opening of the gate for substrate entry. Interconversion between the open-gate and close-gate conformations leads to a dynamic regulation of the 20S proteasome proteolysis activity. Component of the proteasome core, a large protease complex with broad specificity involved in protein degradation. The polypeptide is Proteasome subunit beta 1 (Sulfolobus acidocaldarius (strain ATCC 33909 / DSM 639 / JCM 8929 / NBRC 15157 / NCIMB 11770)).